A 485-amino-acid polypeptide reads, in one-letter code: Glycogen synthase (485 aa).

Lysine 20 is a binding site for ADP-alpha-D-glucose.

Belongs to the glycosyltransferase 1 family. Bacterial/plant glycogen synthase subfamily.

It carries out the reaction [(1-&gt;4)-alpha-D-glucosyl](n) + ADP-alpha-D-glucose = [(1-&gt;4)-alpha-D-glucosyl](n+1) + ADP + H(+). It participates in glycan biosynthesis; glycogen biosynthesis. Functionally, synthesizes alpha-1,4-glucan chains using ADP-glucose. The sequence is that of Glycogen synthase from Vibrio vulnificus (strain CMCP6).